The chain runs to 335 residues: GTPase Obg (335 aa).

The Obg domain maps to 1–158 (MFVDQITLEL…RLVELELKLI (158 aa)). The OBG-type G domain maps to 159–334 (ADIGLVGFPN…LYDLFKSKLS (176 aa)). GTP-binding positions include 165 to 172 (GFPNAGKS), 190 to 194 (FTTLH), 215 to 218 (DIPG), 285 to 288 (NKID), and 315 to 317 (SGL). Residues serine 172 and threonine 192 each coordinate Mg(2+).

The protein belongs to the TRAFAC class OBG-HflX-like GTPase superfamily. OBG GTPase family. As to quaternary structure, monomer. It depends on Mg(2+) as a cofactor.

It is found in the cytoplasm. An essential GTPase which binds GTP, GDP and possibly (p)ppGpp with moderate affinity, with high nucleotide exchange rates and a fairly low GTP hydrolysis rate. Plays a role in control of the cell cycle, stress response, ribosome biogenesis and in those bacteria that undergo differentiation, in morphogenesis control. This is GTPase Obg from Chlamydia trachomatis serovar A (strain ATCC VR-571B / DSM 19440 / HAR-13).